We begin with the raw amino-acid sequence, 256 residues long: Vesicle-associated protein 1-1 (256 aa).

Residue methionine 1 is modified to N-acetylmethionine. Topologically, residues methionine 1–glycine 232 are cytoplasmic. Residue serine 2 is modified to N-acetylserine; in Vesicle-associated protein 1-1, N-terminally processed. The MSP domain maps to leucine 22–valine 142. A disordered region spans residues valine 142–glycine 169. Phosphoserine is present on serine 149. The segment covering glutamate 157–glycine 169 has biased composition (polar residues). Residues histidine 187–glycine 232 adopt a coiled-coil conformation. A helical; Anchor for type IV membrane protein transmembrane segment spans residues glycine 233–methionine 253.

Belongs to the VAMP-associated protein (VAP) (TC 9.B.17) family. Homodimer or homooligomer. Interacts with the cowpea mosaic virus (CPMV) NTP-binding protein (NTB). Interacts with NET3C.

It is found in the endoplasmic reticulum membrane. The protein resides in the protein storage vacuole membrane. Its function is as follows. Part of a membrane-cytoskeletal adapter complex that forms a bridge between the endoplasmic reticulum and the plasma membrane. Associates with microtubules. This Arabidopsis thaliana (Mouse-ear cress) protein is Vesicle-associated protein 1-1 (PVA11).